A 901-amino-acid polypeptide reads, in one-letter code: Protein translocase subunit SecA (901 aa).

Residues Gln-87, 105–109, and Asp-512 contribute to the ATP site; that span reads GEGKT. Positions 858–891 are disordered; the sequence is SHQDDDTAAAAALAAQTGDRKVGRNDPCPCGSGK. Residues Cys-885, Cys-887, Cys-896, and His-897 each coordinate Zn(2+).

Belongs to the SecA family. As to quaternary structure, monomer and homodimer. Part of the essential Sec protein translocation apparatus which comprises SecA, SecYEG and auxiliary proteins SecDF-YajC and YidC. Zn(2+) is required as a cofactor.

Its subcellular location is the cell inner membrane. It is found in the cytoplasm. It catalyses the reaction ATP + H2O + cellular proteinSide 1 = ADP + phosphate + cellular proteinSide 2.. Its function is as follows. Part of the Sec protein translocase complex. Interacts with the SecYEG preprotein conducting channel. Has a central role in coupling the hydrolysis of ATP to the transfer of proteins into and across the cell membrane, serving both as a receptor for the preprotein-SecB complex and as an ATP-driven molecular motor driving the stepwise translocation of polypeptide chains across the membrane. The polypeptide is Protein translocase subunit SecA (Escherichia fergusonii (strain ATCC 35469 / DSM 13698 / CCUG 18766 / IAM 14443 / JCM 21226 / LMG 7866 / NBRC 102419 / NCTC 12128 / CDC 0568-73)).